A 378-amino-acid polypeptide reads, in one-letter code: Protein RecA (378 aa).

An ATP-binding site is contributed by 66 to 73 (GPESSGKT). Positions 333-378 (PDAAKAEAATDAAAAADTAGTDDAAKSVPAPASKTAKATKATAVKS) are disordered. The span at 338–378 (AEAATDAAAAADTAGTDDAAKSVPAPASKTAKATKATAVKS) shows a compositional bias: low complexity.

Belongs to the RecA family.

The protein localises to the cytoplasm. In terms of biological role, can catalyze the hydrolysis of ATP in the presence of single-stranded DNA, the ATP-dependent uptake of single-stranded DNA by duplex DNA, and the ATP-dependent hybridization of homologous single-stranded DNAs. It interacts with LexA causing its activation and leading to its autocatalytic cleavage. This is Protein RecA from Streptomyces venezuelae (strain ATCC 10712 / CBS 650.69 / DSM 40230 / JCM 4526 / NBRC 13096 / PD 04745).